The primary structure comprises 569 residues: Formate--tetrahydrofolate ligase (569 aa).

Residue 68–75 (TPAGEGKT) coordinates ATP.

The protein belongs to the formate--tetrahydrofolate ligase family.

It catalyses the reaction (6S)-5,6,7,8-tetrahydrofolate + formate + ATP = (6R)-10-formyltetrahydrofolate + ADP + phosphate. Its pathway is one-carbon metabolism; tetrahydrofolate interconversion. The polypeptide is Formate--tetrahydrofolate ligase (Psychrobacter sp. (strain PRwf-1)).